The chain runs to 307 residues: MKGQQKVADIEEGTVRVQEEGAVATGEDPTSVAIASIQSAATFSDPNVKYVFRTENGGAQVMYRVIQVAEGQLDGQTEGTGAISGFPATQSMTQAVIQGAFTSDDNGETDASGPETHYTYFPTDSSTSVGGTPTTVVTTHNSDTLLGQAASTGTGQFYVMMSSQDVLQGGSQRSIAPRTHPYSPKSDGPRTTRDDKRRAQHNEVERRRRDKINNWIVQLSKIIPDCSMESTKTGQSKGGILSKACDYIQELRQSNLRLSEELQNLDQLQMDNEVLRQQVEDLKNNNLTLRTQLRHHGVEIIIKSDTH.

2 disordered regions span residues 104 to 131 and 168 to 207; these read DDNGETDASGPETHYTYFPTDSSTSVGG and QGGSQRSIAPRTHPYSPKSDGPRTTRDDKRRAQHNEVERR. Residues 122-131 are compositionally biased toward low complexity; sequence PTDSSTSVGG. Over residues 187–207 the composition is skewed to basic and acidic residues; the sequence is DGPRTTRDDKRRAQHNEVERR. The region spanning 196–251 is the bHLH domain; sequence KRRAQHNEVERRRRDKINNWIVQLSKIIPDCSMESTKTGQSKGGILSKACDYIQEL. Residues 268–289 are leucine-zipper; that stretch reads LQMDNEVLRQQVEDLKNNNLTL.

Efficient DNA binding requires dimerization with another bHLH protein. Binds DNA as a homodimer or a heterodimer. As to expression, oocyte and somatic tissue. Oocytic and somatic forms of this protein exist, probably as a result of post-translational modifications or minor splicing differences.

It is found in the nucleus. Functionally, may act as a regulator of transcription factor IIIA (TFIIIA) gene expression. This is Upstream stimulatory factor 1 (usf1) from Xenopus borealis (Kenyan clawed frog).